Consider the following 248-residue polypeptide: Non-specific acid phosphatase (248 aa).

The first 20 residues, 1–20 (MKKLLAVFCAGAFVSTSVFA), serve as a signal peptide directing secretion.

The protein belongs to the class A bacterial acid phosphatase family.

The protein resides in the periplasm. The enzyme catalyses a phosphate monoester + H2O = an alcohol + phosphate. In Providencia stuartii, this protein is Non-specific acid phosphatase (phoN).